Here is a 475-residue protein sequence, read N- to C-terminus: Ribulose bisphosphate carboxylase large chain (475 aa).

The propeptide occupies 1-2; that stretch reads MV. Pro-3 carries the N-acetylproline modification. N6,N6,N6-trimethyllysine is present on Lys-14. Substrate is bound by residues Asn-123 and Thr-173. Lys-175 functions as the Proton acceptor in the catalytic mechanism. Residue Lys-177 participates in substrate binding. Positions 201, 203, and 204 each coordinate Mg(2+). Lys-201 bears the N6-carboxylysine mark. The active-site Proton acceptor is the His-294. Substrate-binding residues include Arg-295, His-327, and Ser-379.

The protein belongs to the RuBisCO large chain family. Type I subfamily. Heterohexadecamer of 8 large chains and 8 small chains. The cofactor is Mg(2+).

The protein resides in the plastid. The protein localises to the chloroplast. It catalyses the reaction 2 (2R)-3-phosphoglycerate + 2 H(+) = D-ribulose 1,5-bisphosphate + CO2 + H2O. The enzyme catalyses D-ribulose 1,5-bisphosphate + O2 = 2-phosphoglycolate + (2R)-3-phosphoglycerate + 2 H(+). In terms of biological role, ruBisCO catalyzes two reactions: the carboxylation of D-ribulose 1,5-bisphosphate, the primary event in carbon dioxide fixation, as well as the oxidative fragmentation of the pentose substrate in the photorespiration process. Both reactions occur simultaneously and in competition at the same active site. This is Ribulose bisphosphate carboxylase large chain from Stigeoclonium helveticum (Green alga).